Reading from the N-terminus, the 292-residue chain is Elongation factor Ts (292 aa).

The involved in Mg(2+) ion dislocation from EF-Tu stretch occupies residues Thr82–Val85.

Belongs to the EF-Ts family.

It localises to the cytoplasm. Its function is as follows. Associates with the EF-Tu.GDP complex and induces the exchange of GDP to GTP. It remains bound to the aminoacyl-tRNA.EF-Tu.GTP complex up to the GTP hydrolysis stage on the ribosome. The chain is Elongation factor Ts from Legionella pneumophila subsp. pneumophila (strain Philadelphia 1 / ATCC 33152 / DSM 7513).